The sequence spans 306 residues: Nucleotide-binding protein RSal33209_2275 (306 aa).

29–36 (GMSGAGRS) serves as a coordination point for ATP. 80 to 83 (DVRG) is a binding site for GTP.

It belongs to the RapZ-like family.

Its function is as follows. Displays ATPase and GTPase activities. The protein is Nucleotide-binding protein RSal33209_2275 of Renibacterium salmoninarum (strain ATCC 33209 / DSM 20767 / JCM 11484 / NBRC 15589 / NCIMB 2235).